Reading from the N-terminus, the 353-residue chain is UPF0283 membrane protein YPTS_2342 (353 aa).

3 consecutive transmembrane segments (helical) span residues Met71–Val91, Ile101–Val121, and Glu214–Trp234.

Belongs to the UPF0283 family.

Its subcellular location is the cell inner membrane. This is UPF0283 membrane protein YPTS_2342 from Yersinia pseudotuberculosis serotype IB (strain PB1/+).